Consider the following 259-residue polypeptide: Acetylglutamate kinase (259 aa).

Substrate-binding positions include glycine 46–glycine 47, arginine 68, and asparagine 162.

The protein belongs to the acetylglutamate kinase family. ArgB subfamily.

It localises to the cytoplasm. The catalysed reaction is N-acetyl-L-glutamate + ATP = N-acetyl-L-glutamyl 5-phosphate + ADP. The protein operates within amino-acid biosynthesis; L-arginine biosynthesis; N(2)-acetyl-L-ornithine from L-glutamate: step 2/4. Its function is as follows. Catalyzes the ATP-dependent phosphorylation of N-acetyl-L-glutamate. This is Acetylglutamate kinase from Roseiflexus castenholzii (strain DSM 13941 / HLO8).